An 80-amino-acid polypeptide reads, in one-letter code: Conotoxin VnMSGL-0123 (80 aa).

The N-terminal stretch at Met-1 to Ser-20 is a signal peptide. A propeptide spanning residues His-21–Thr-44 is cleaved from the precursor. 3 disulfides stabilise this stretch: Cys-53–Cys-65, Cys-57–Cys-74, and Cys-64–Cys-78. Phenylalanine amide is present on Phe-79.

It belongs to the conotoxin O3 superfamily. Expressed by the venom duct.

The protein resides in the secreted. In Conus ventricosus (Mediterranean cone), this protein is Conotoxin VnMSGL-0123.